A 136-amino-acid chain; its full sequence is Small nuclear ribonucleoprotein Sm D3 (136 aa).

The Sm domain maps to 6 to 78 (VPIKILHEAE…IRFMILPDML (73 aa)). The segment at 98–136 (GLGGLDQRGRGRGTAFRRPMGRGGPRGMSRPGGAPTFRG) is disordered.

Belongs to the snRNP core protein family.

It localises to the nucleus. It is found in the cytoplasm. The protein resides in the cytosol. In terms of biological role, plays a role in pre-mRNA splicing as a core component of the spliceosomal U1, U2, U4 and U5 small nuclear ribonucleoproteins (snRNPs), the building blocks of the spliceosome. This Caenorhabditis elegans protein is Small nuclear ribonucleoprotein Sm D3 (snr-1).